The sequence spans 529 residues: Transcription activator of gluconeogenesis ERT1 (529 aa).

The tract at residues 1 to 31 is disordered; it reads MCTPDENDYKTSTDPDTSANTNHTLEKKKRK. The segment covering 14–23 has biased composition (polar residues); that stretch reads DPDTSANTNH. The segment at residues 40–68 is a DNA-binding region (zn(2)-C6 fungal-type); it reads CVNCSRLHVSCEAKRPCLRCISKGLTATC. Residues 174 to 193 show a composition bias toward low complexity; that stretch reads SNSTIGNSSNNSPTGTNTSP. The disordered stretch occupies residues 174–198; that stretch reads SNSTIGNSSNNSPTGTNTSPEETEM. The region spanning 408–480 is the PAS domain; the sequence is TLLEYVKFIA…KTLSKVAYRD (73 aa).

The protein belongs to the ERT1/acuK family.

It localises to the cytoplasm. The protein resides in the nucleus. Its function is as follows. Transcription factor which regulates nonfermentable carbon utilization. Activator of gluconeogenetic genes like PCK1. Involved in restriction of Ty1 transposition. This Saccharomyces cerevisiae (strain ATCC 204508 / S288c) (Baker's yeast) protein is Transcription activator of gluconeogenesis ERT1 (ERT1).